The following is a 457-amino-acid chain: tRNA modification GTPase MnmE (457 aa).

(6S)-5-formyl-5,6,7,8-tetrahydrofolate is bound by residues arginine 22, glutamate 86, and arginine 125. Positions 221–381 (GLRAVLAGRP…LEAEVARVAG (161 aa)) constitute a TrmE-type G domain. Position 231 (asparagine 231) interacts with K(+). GTP-binding positions include 231–236 (NVGKSS), 250–256 (TPIPGTT), and 275–278 (DTAG). Serine 235 is a Mg(2+) binding site. Residues threonine 250, isoleucine 252, and threonine 255 each coordinate K(+). Threonine 256 contributes to the Mg(2+) binding site. Residue lysine 457 participates in (6S)-5-formyl-5,6,7,8-tetrahydrofolate binding.

The protein belongs to the TRAFAC class TrmE-Era-EngA-EngB-Septin-like GTPase superfamily. TrmE GTPase family. In terms of assembly, homodimer. Heterotetramer of two MnmE and two MnmG subunits. The cofactor is K(+).

The protein localises to the cytoplasm. Exhibits a very high intrinsic GTPase hydrolysis rate. Involved in the addition of a carboxymethylaminomethyl (cmnm) group at the wobble position (U34) of certain tRNAs, forming tRNA-cmnm(5)s(2)U34. This is tRNA modification GTPase MnmE from Symbiobacterium thermophilum (strain DSM 24528 / JCM 14929 / IAM 14863 / T).